The chain runs to 379 residues: Dual-specificity RNA methyltransferase RlmN (379 aa).

Glu96 (proton acceptor) is an active-site residue. A Radical SAM core domain is found at 102-342 (TDDRGTLCVS…TRTTRGDDID (241 aa)). A disulfide bond links Cys109 and Cys345. [4Fe-4S] cluster is bound by residues Cys116, Cys120, and Cys123. S-adenosyl-L-methionine-binding positions include 170–171 (GE), Ser202, 224–226 (SLH), and Asn302. Cys345 serves as the catalytic S-methylcysteine intermediate.

Belongs to the radical SAM superfamily. RlmN family. [4Fe-4S] cluster is required as a cofactor.

It is found in the cytoplasm. The catalysed reaction is adenosine(2503) in 23S rRNA + 2 reduced [2Fe-2S]-[ferredoxin] + 2 S-adenosyl-L-methionine = 2-methyladenosine(2503) in 23S rRNA + 5'-deoxyadenosine + L-methionine + 2 oxidized [2Fe-2S]-[ferredoxin] + S-adenosyl-L-homocysteine. It catalyses the reaction adenosine(37) in tRNA + 2 reduced [2Fe-2S]-[ferredoxin] + 2 S-adenosyl-L-methionine = 2-methyladenosine(37) in tRNA + 5'-deoxyadenosine + L-methionine + 2 oxidized [2Fe-2S]-[ferredoxin] + S-adenosyl-L-homocysteine. Its function is as follows. Specifically methylates position 2 of adenine 2503 in 23S rRNA and position 2 of adenine 37 in tRNAs. m2A2503 modification seems to play a crucial role in the proofreading step occurring at the peptidyl transferase center and thus would serve to optimize ribosomal fidelity. The polypeptide is Dual-specificity RNA methyltransferase RlmN (Pseudomonas entomophila (strain L48)).